Consider the following 209-residue polypeptide: Leucyl/phenylalanyl-tRNA--protein transferase (209 aa).

This sequence belongs to the L/F-transferase family.

Its subcellular location is the cytoplasm. It catalyses the reaction N-terminal L-lysyl-[protein] + L-leucyl-tRNA(Leu) = N-terminal L-leucyl-L-lysyl-[protein] + tRNA(Leu) + H(+). The catalysed reaction is N-terminal L-arginyl-[protein] + L-leucyl-tRNA(Leu) = N-terminal L-leucyl-L-arginyl-[protein] + tRNA(Leu) + H(+). The enzyme catalyses L-phenylalanyl-tRNA(Phe) + an N-terminal L-alpha-aminoacyl-[protein] = an N-terminal L-phenylalanyl-L-alpha-aminoacyl-[protein] + tRNA(Phe). In terms of biological role, functions in the N-end rule pathway of protein degradation where it conjugates Leu, Phe and, less efficiently, Met from aminoacyl-tRNAs to the N-termini of proteins containing an N-terminal arginine or lysine. The polypeptide is Leucyl/phenylalanyl-tRNA--protein transferase (Paramagnetospirillum magneticum (strain ATCC 700264 / AMB-1) (Magnetospirillum magneticum)).